The primary structure comprises 161 residues: Probable chemoreceptor glutamine deamidase CheD (161 aa).

This sequence belongs to the CheD family.

It carries out the reaction L-glutaminyl-[protein] + H2O = L-glutamyl-[protein] + NH4(+). Probably deamidates glutamine residues to glutamate on methyl-accepting chemotaxis receptors (MCPs), playing an important role in chemotaxis. This Thermococcus kodakarensis (strain ATCC BAA-918 / JCM 12380 / KOD1) (Pyrococcus kodakaraensis (strain KOD1)) protein is Probable chemoreceptor glutamine deamidase CheD.